The primary structure comprises 644 residues: Sodium/potassium/calcium exchanger 3 (644 aa).

The N-terminal stretch at 1–44 is a signal peptide; sequence MRPSGDEDRARRRRRRRRRRDLLLSQLCFLASVALLLWSLSSLR. The Extracellular segment spans residues 45–107; that stretch reads EQKELDLMDL…DIFTNEDRRQ (63 aa). Residues Asn-71 and Asn-86 are each glycosylated (N-linked (GlcNAc...) asparagine). A helical membrane pass occupies residues 108–128; that stretch reads GAVVLHVLCAIYMFYALAIVC. The Cytoplasmic portion of the chain corresponds to 129-153; it reads DDFFVPSLEKICERLHLSEDVAGAT. An Alpha-1 repeat occupies 149–189; sequence VAGATFMAAGSSAPELFTSVIGVFITKGDVGVGTIVGSAVF. A helical membrane pass occupies residues 154-174; sequence FMAAGSSAPELFTSVIGVFIT. The Extracellular segment spans residues 175 to 182; the sequence is KGDVGVGT. Residues 183-203 traverse the membrane as a helical segment; sequence IVGSAVFNILCIIGVCGLFAG. At 204 to 210 the chain is on the cytoplasmic side; that stretch reads QVVALSS. A helical membrane pass occupies residues 211–231; it reads WCLLRDSIYYTLSVIALIVFI. Residues 232 to 234 are Extracellular-facing; that stretch reads YDE. Residues 235–255 traverse the membrane as a helical segment; it reads KVSWWESLVLVLMYLIYIVIM. At 256–484 the chain is on the cytoplasmic side; that stretch reads KYNACIHQCF…WFMVTFASST (229 aa). Residue Ser-308 is modified to Phosphoserine. The segment at 405–442 is disordered; sequence AEAGNETENENEDNENDEEEEEDEDDDEGPYTPFDTPS. A compositionally biased stretch (acidic residues) spans 409-433; it reads NETENENEDNENDEEEEEDEDDDEG. The helical transmembrane segment at 485–505 threads the bilayer; sequence LWIAAFSYMMVWMVTIIGYTL. Over 506–510 the chain is Extracellular; that stretch reads GIPDV. A helical transmembrane segment spans residues 511–531; that stretch reads IMGITFLAAGTSVPDCMASLI. One copy of the Alpha-2 repeat lies at 518 to 549; sequence AAGTSVPDCMASLIVARQGMGDMAVSNSIGSN. Topologically, residues 532–549 are cytoplasmic; the sequence is VARQGMGDMAVSNSIGSN. Residues 550–570 traverse the membrane as a helical segment; that stretch reads VFDILIGLGLPWALQTLAVDY. Over 571-580 the chain is Extracellular; it reads GSYIRLNSRG. A helical membrane pass occupies residues 581–601; that stretch reads LIYSVGLLLASVFVTVFGVHL. Over 602–615 the chain is Cytoplasmic; that stretch reads NKWQLDKKLGCGCL. A helical transmembrane segment spans residues 616–636; sequence LLYGVFLCFSIMTEFNVFTFV. Residues 637–644 lie on the Extracellular side of the membrane; that stretch reads NLPMCGDH.

It belongs to the Ca(2+):cation antiporter (CaCA) (TC 2.A.19) family. SLC24A subfamily. As to expression, abundant in the brain. Expressed at low levels in the aorta, uterus and intestine.

It localises to the cell membrane. The catalysed reaction is Ca(2+)(out) + K(+)(out) + 4 Na(+)(in) = Ca(2+)(in) + K(+)(in) + 4 Na(+)(out). Functionally, calcium, potassium:sodium antiporter that transports 1 Ca(2+) and 1 K(+) in exchange for 4 Na(+). This is Sodium/potassium/calcium exchanger 3 (SLC24A3) from Homo sapiens (Human).